Reading from the N-terminus, the 318-residue chain is Nitrate reductase [NADH] (318 aa).

Positions 216–291 (AKSFTMAEVE…LLEYYIGELA (76 aa)) constitute a Cytochrome b5 heme-binding domain. His251 and His274 together coordinate heme.

This sequence belongs to the nitrate reductase family. Homodimer. The cofactor is FAD. It depends on heme as a cofactor. Mo-molybdopterin serves as cofactor.

It carries out the reaction nitrite + NAD(+) + H2O = nitrate + NADH + H(+). In terms of biological role, nitrate reductase is a key enzyme involved in the first step of nitrate assimilation in plants, fungi and bacteria. The polypeptide is Nitrate reductase [NADH] (Chlorella vulgaris (Green alga)).